The primary structure comprises 511 residues: Chromosomal replication initiator protein DnaA (511 aa).

Residues 1–90 (MSVELWQQCV…KRSSAPRAAP (90 aa)) are domain I, interacts with DnaA modulators. Residues 91-174 (NAPLAAAASQ…QVEGALKHTS (84 aa)) are domain II. The segment at 133-162 (VAAHDEPSRDSFDPMAGASSQQAPARAEQR) is disordered. The span at 135–144 (AHDEPSRDSF) shows a compositional bias: basic and acidic residues. Residues 175–391 (YLNRTFTFEN…GALKRVIAHS (217 aa)) are domain III, AAA+ region. ATP-binding residues include Gly-219, Gly-221, Lys-222, and Thr-223. Positions 392–511 (HFMGRDITIE…YKNLLRTLTT (120 aa)) are domain IV, binds dsDNA.

The protein belongs to the DnaA family. In terms of assembly, oligomerizes as a right-handed, spiral filament on DNA at oriC.

It is found in the cytoplasm. Its function is as follows. Plays an essential role in the initiation and regulation of chromosomal replication. ATP-DnaA binds to the origin of replication (oriC) to initiate formation of the DNA replication initiation complex once per cell cycle. Binds the DnaA box (a 9 base pair repeat at the origin) and separates the double-stranded (ds)DNA. Forms a right-handed helical filament on oriC DNA; dsDNA binds to the exterior of the filament while single-stranded (ss)DNA is stabiized in the filament's interior. The ATP-DnaA-oriC complex binds and stabilizes one strand of the AT-rich DNA unwinding element (DUE), permitting loading of DNA polymerase. After initiation quickly degrades to an ADP-DnaA complex that is not apt for DNA replication. Binds acidic phospholipids. This Pseudomonas savastanoi pv. phaseolicola (strain 1448A / Race 6) (Pseudomonas syringae pv. phaseolicola (strain 1448A / Race 6)) protein is Chromosomal replication initiator protein DnaA.